Here is a 1173-residue protein sequence, read N- to C-terminus: AT-rich interactive domain-containing protein 5B (1173 aa).

Lys130 is covalently cross-linked (Glycyl lysine isopeptide (Lys-Gly) (interchain with G-Cter in SUMO2)). The tract at residues 249–283 is disordered; sequence PNLKGRPRKKKPCPQRRDSFSGGKDPNNNSDGKSV. A compositionally biased stretch (basic residues) spans 253–262; sequence GRPRKKKPCP. Ser267 carries the phosphoserine modification. The ARID domain occupies 322-414; sequence RADEQAFLVA…LILPYERFIK (93 aa). Position 340 is an N6,N6-dimethyllysine (Lys340). Positions 416–607 are disordered; that stretch reads EEDKPLPPIK…QPPLANQSEV (192 aa). Lys449 participates in a covalent cross-link: Glycyl lysine isopeptide (Lys-Gly) (interchain with G-Cter in SUMO2). The span at 450–462 shows a compositional bias: basic and acidic residues; sequence HEISKSKKEKENA. Glycyl lysine isopeptide (Lys-Gly) (interchain with G-Cter in SUMO2) cross-links involve residues Lys497 and Lys499. The segment covering 547 to 557 has biased composition (low complexity); sequence SAPLAPTPGTG. Residues 593–605 are compositionally biased toward polar residues; the sequence is GFSTTQPPLANQS. Residues Lys763 and Lys769 each participate in a glycyl lysine isopeptide (Lys-Gly) (interchain with G-Cter in SUMO2) cross-link. 3 disordered regions span residues 777–802, 877–924, and 936–965; these read EPRFSFSKHHLSPSKKSRGRRTVEKR, KKSA…GTSQ, and HPKACRVSPMTMSAPKKYPEALSRSGKPHP. Residues 782–796 show a composition bias toward basic residues; sequence FSKHHLSPSKKSRGR. Glycyl lysine isopeptide (Lys-Gly) (interchain with G-Cter in SUMO2) cross-links involve residues Lys878, Lys901, Lys905, and Lys920. Residues Lys973, Lys985, and Lys998 each participate in a glycyl lysine isopeptide (Lys-Gly) (interchain with G-Cter in SUMO2) cross-link. Ser1017 is subject to Phosphoserine. A disordered region spans residues 1017–1055; sequence SPLDPAKEVSGKEKASEQESEGSKAAHSGHSGGTSEGHK. Residues 1021-1040 are compositionally biased toward basic and acidic residues; the sequence is PAKEVSGKEKASEQESEGSK. Glycyl lysine isopeptide (Lys-Gly) (interchain with G-Cter in SUMO2) cross-links involve residues Lys1040 and Lys1055. Ser1118 is subject to Phosphoserine.

Belongs to the ARID5B family. In terms of processing, methylation at Lys-340 prevents DNA-binding. Demethylation by PHF2 promotes recruitment of the PHF2-ARID5B complex to promoters.

The protein localises to the nucleus. Transcription coactivator that binds to the 5'-AATA[CT]-3' core sequence and plays a key role in adipogenesis and liver development. Acts by forming a complex with phosphorylated PHF2, which mediates demethylation at Lys-340, leading to target the PHF2-ARID5B complex to target promoters, where PHF2 mediates demethylation of dimethylated 'Lys-9' of histone H3 (H3K9me2), followed by transcription activation of target genes. The PHF2-ARID5B complex acts as a coactivator of HNF4A in liver. Required for adipogenesis: regulates triglyceride metabolism in adipocytes by regulating expression of adipogenic genes. Overexpression leads to induction of smooth muscle marker genes, suggesting that it may also act as a regulator of smooth muscle cell differentiation and proliferation. The sequence is that of AT-rich interactive domain-containing protein 5B (ARID5B) from Bos taurus (Bovine).